A 377-amino-acid polypeptide reads, in one-letter code: MRANCSSSSACPANSSEEELPVGLEVHGNLELVFTVVSTVMMGLLMFSLGCSVEIRKLWSHIRRPWGIAVGLLCQFGLMPFTAYLLAISFSLKPVQAIAVLIMGCCPGGTISNIFTFWVDGDMDLSISMTTCSTVAALGMMPLCIYLYTWSWSLQQNLTIPYQNIGITLVCLTIPVAFGVYVNYRWPKQSKIILKIGAVVGGVLLLVVAVAGVVLAKGSWNSDITLLTISFIFPLIGHVTGFLLALFTHQSWQRCRTISLETGAQNIQMCITMLQLSFTAEHLVQMLSFPLAYGLFQLIDGFLIVAAYQTYKRRLKNKHGKKNSGCTEVCHTRKSTSSRETNAFLEVNEEGAITPGPPGPMDCHRALEPVGHITSCE.

At 1 to 29 (MRANCSSSSACPANSSEEELPVGLEVHGN) the chain is on the extracellular side. Asn-4 carries an N-linked (GlcNAc...) asparagine glycan. The chain crosses the membrane as a helical span at residues 30-50 (LELVFTVVSTVMMGLLMFSLG). The Cytoplasmic portion of the chain corresponds to 51 to 67 (CSVEIRKLWSHIRRPWG). A helical membrane pass occupies residues 68–88 (IAVGLLCQFGLMPFTAYLLAI). Over 89–97 (SFSLKPVQA) the chain is Extracellular. The helical transmembrane segment at 98-118 (IAVLIMGCCPGGTISNIFTFW) threads the bilayer. The Cytoplasmic segment spans residues 119–133 (VDGDMDLSISMTTCS). Residues 134 to 154 (TVAALGMMPLCIYLYTWSWSL) form a helical membrane-spanning segment. Topologically, residues 155-159 (QQNLT) are extracellular. Residue Asn-157 is glycosylated (N-linked (GlcNAc...) asparagine). Residues 160 to 180 (IPYQNIGITLVCLTIPVAFGV) form a helical membrane-spanning segment. The Cytoplasmic portion of the chain corresponds to 181–195 (YVNYRWPKQSKIILK). Residues 196–216 (IGAVVGGVLLLVVAVAGVVLA) form a helical membrane-spanning segment. Residues 217–226 (KGSWNSDITL) are Extracellular-facing. The helical transmembrane segment at 227–247 (LTISFIFPLIGHVTGFLLALF) threads the bilayer. Residues 248 to 266 (THQSWQRCRTISLETGAQN) are Cytoplasmic-facing. A helical transmembrane segment spans residues 267 to 285 (IQMCITMLQLSFTAEHLVQ). The Extracellular portion of the chain corresponds to 286–290 (MLSFP). Residues 291–311 (LAYGLFQLIDGFLIVAAYQTY) form a helical membrane-spanning segment. The Cytoplasmic segment spans residues 312 to 377 (KRRLKNKHGK…EPVGHITSCE (66 aa)).

This sequence belongs to the bile acid:sodium symporter (BASS) (TC 2.A.28) family. Post-translationally, glycosylated. As to expression, highly expressed in testis, placenta and pancreas. Moderately expressed in heart, lung and mammary gland. Weakly expressed in brain, colon, kidney, liver, ovary, prostate, small intestine, spleen and thymus.

It localises to the membrane. It catalyses the reaction estrone 3-sulfate(out) + 2 Na(+)(out) = estrone 3-sulfate(in) + 2 Na(+)(in). It carries out the reaction 17beta-estradiol 3-sulfate(out) + 2 Na(+)(out) = 17beta-estradiol 3-sulfate(in) + 2 Na(+)(in). The catalysed reaction is dehydroepiandrosterone 3-sulfate(out) + 2 Na(+)(out) = dehydroepiandrosterone 3-sulfate(in) + 2 Na(+)(in). The enzyme catalyses androst-5-ene-diol 3-sulfate(out) + 2 Na(+)(out) = androst-5-ene-diol 3-sulfate(in) + 2 Na(+)(in). It catalyses the reaction pregnenolone sulfate(out) + 2 Na(+)(out) = pregnenolone sulfate(in) + 2 Na(+)(in). It carries out the reaction taurolithocholate 3-sulfate(out) + 2 Na(+)(out) = taurolithocholate 3-sulfate(in) + 2 Na(+)(in). The catalysed reaction is androsterone 3alpha-sulfate(out) + 2 Na(+)(out) = androsterone 3alpha-sulfate(in) + 2 Na(+)(in). The enzyme catalyses 5alpha-dihydrotestosterone sulfate(out) + 2 Na(+)(out) = 5alpha-dihydrotestosterone sulfate(in) + 2 Na(+)(in). It catalyses the reaction 17beta-estradiol 17-sulfate(out) + 2 Na(+)(out) = 17beta-estradiol 17-sulfate(in) + 2 Na(+)(in). It carries out the reaction 17alpha-hydroxypregnenolone 3-sulfate(out) + 2 Na(+)(out) = 17alpha-hydroxypregnenolone 3-sulfate(in) + 2 Na(+)(in). The catalysed reaction is epiandrosterone 3-sulfate(out) + 2 Na(+)(out) = epiandrosterone 3-sulfate(in) + 2 Na(+)(in). The enzyme catalyses epitestosterone 17-sulfate(out) + 2 Na(+)(out) = epitestosterone 17-sulfate(in) + 2 Na(+)(in). It catalyses the reaction testosterone 17-sulfate(out) + 2 Na(+)(out) = testosterone 17-sulfate(in) + 2 Na(+)(in). It carries out the reaction 16alpha-hydroxydehydroepiandrosterone 3-sulfate(out) + 2 Na(+)(out) = 16alpha-hydroxydehydroepiandrosterone 3-sulfate(in) + 2 Na(+)(in). Functionally, transports sulfoconjugated steroid hormones from the extracellular compartment into the cytosol in a sodium-dependent manner without hydrolysis. Steroid sulfate hormones are commonly considered to be biologically inactive metabolites, that may be activated by steroid sulfatases into free steroids. May play an important role by delivering sulfoconjugated steroids to specific target cells in reproductive organs. May play a role transporting the estriol precursor 16alpha-hydroxydehydroepiandrosterone 3-sulfate (16a-OH-DHEAS) at the fetal blood vessel endothelium. Can also transport other sulfoconjugated molecules such as taurolithocholic acid-3-sulfate and sulfoconjugated pyrenes. The protein is Sodium-dependent organic anion transporter (SLC10A6) of Homo sapiens (Human).